Reading from the N-terminus, the 121-residue chain is Large ribosomal subunit protein uL22 (121 aa).

This sequence belongs to the universal ribosomal protein uL22 family. Part of the 50S ribosomal subunit.

Its function is as follows. This protein binds specifically to 23S rRNA; its binding is stimulated by other ribosomal proteins, e.g. L4, L17, and L20. It is important during the early stages of 50S assembly. It makes multiple contacts with different domains of the 23S rRNA in the assembled 50S subunit and ribosome. The globular domain of the protein is located near the polypeptide exit tunnel on the outside of the subunit, while an extended beta-hairpin is found that lines the wall of the exit tunnel in the center of the 70S ribosome. The protein is Large ribosomal subunit protein uL22 of Pseudarthrobacter chlorophenolicus (strain ATCC 700700 / DSM 12829 / CIP 107037 / JCM 12360 / KCTC 9906 / NCIMB 13794 / A6) (Arthrobacter chlorophenolicus).